Reading from the N-terminus, the 185-residue chain is Elongation factor P (185 aa).

This sequence belongs to the elongation factor P family.

The protein resides in the cytoplasm. It participates in protein biosynthesis; polypeptide chain elongation. Its function is as follows. Involved in peptide bond synthesis. Stimulates efficient translation and peptide-bond synthesis on native or reconstituted 70S ribosomes in vitro. Probably functions indirectly by altering the affinity of the ribosome for aminoacyl-tRNA, thus increasing their reactivity as acceptors for peptidyl transferase. In Rippkaea orientalis (strain PCC 8801 / RF-1) (Cyanothece sp. (strain PCC 8801)), this protein is Elongation factor P.